Consider the following 262-residue polypeptide: Enoyl-[acyl-carrier-protein] reductase [NADH] FabI (262 aa).

Residues G13, 19 to 20, Q40, 64 to 65, and I92 each bind NAD(+); these read SI and DV. A95 contacts substrate. Catalysis depends on proton acceptor residues Y146 and Y156. Residues K163 and 192–196 each bind NAD(+); that span reads IRTLA.

This sequence belongs to the short-chain dehydrogenases/reductases (SDR) family. FabI subfamily. Homotetramer.

The enzyme catalyses a 2,3-saturated acyl-[ACP] + NAD(+) = a (2E)-enoyl-[ACP] + NADH + H(+). The catalysed reaction is (2E)-butenoyl-[ACP] + NADH + H(+) = butanoyl-[ACP] + NAD(+). It catalyses the reaction (2E)-decenoyl-[ACP] + NADH + H(+) = decanoyl-[ACP] + NAD(+). It carries out the reaction (2E)-hexadecenoyl-[ACP] + NADH + H(+) = hexadecanoyl-[ACP] + NAD(+). The enzyme catalyses (2E,9Z)-hexadecadienoyl-[ACP] + NADH + H(+) = (9Z)-hexadecenoyl-[ACP] + NAD(+). The catalysed reaction is (2E)-5-methylhexenoyl-[ACP] + NADH + H(+) = 5-methylhexanoyl-[ACP] + NAD(+). It participates in lipid metabolism; fatty acid biosynthesis. It functions in the pathway cofactor biosynthesis; biotin biosynthesis. With respect to regulation, inhibited by diazaborines, triclosan (5-chloro-2-2,4-dichlorophenoxyphenol), 1,4-disubstituted imidazoles, 1,4-benzodiazepine derivatives, naphthyridinone derivatives, luteolin and curcumin. The antibiotic diazaborine interferes with the activity by binding to the protein and NAD. In terms of biological role, catalyzes the reduction of a carbon-carbon double bond in an enoyl moiety that is covalently linked to an acyl carrier protein (ACP). Involved in the elongation cycle of fatty acid which are used in the lipid metabolism and in the biotin biosynthesis. This is Enoyl-[acyl-carrier-protein] reductase [NADH] FabI (fabI) from Escherichia coli (strain K12).